Consider the following 377-residue polypeptide: F-box protein At2g05970 (377 aa).

One can recognise an F-box domain in the interval 8-55 (ASWSELCPDVLRCVFELLSFSDLNRTRSVCSSWHSASRHCVPTQNQIP).

The protein is F-box protein At2g05970 of Arabidopsis thaliana (Mouse-ear cress).